Reading from the N-terminus, the 375-residue chain is Succinyl-diaminopimelate desuccinylase (375 aa).

His66 is a Zn(2+) binding site. Asp68 is a catalytic residue. Asp99 is a binding site for Zn(2+). The Proton acceptor role is filled by Glu133. Zn(2+)-binding residues include Glu134, Glu162, and His348.

This sequence belongs to the peptidase M20A family. DapE subfamily. As to quaternary structure, homodimer. Zn(2+) serves as cofactor. Co(2+) is required as a cofactor.

It carries out the reaction N-succinyl-(2S,6S)-2,6-diaminopimelate + H2O = (2S,6S)-2,6-diaminopimelate + succinate. It functions in the pathway amino-acid biosynthesis; L-lysine biosynthesis via DAP pathway; LL-2,6-diaminopimelate from (S)-tetrahydrodipicolinate (succinylase route): step 3/3. Functionally, catalyzes the hydrolysis of N-succinyl-L,L-diaminopimelic acid (SDAP), forming succinate and LL-2,6-diaminopimelate (DAP), an intermediate involved in the bacterial biosynthesis of lysine and meso-diaminopimelic acid, an essential component of bacterial cell walls. In Methylobacillus flagellatus (strain ATCC 51484 / DSM 6875 / VKM B-1610 / KT), this protein is Succinyl-diaminopimelate desuccinylase.